We begin with the raw amino-acid sequence, 103 residues long: Urease subunit beta (103 aa).

This sequence belongs to the urease beta subunit family. In terms of assembly, heterotrimer of UreA (gamma), UreB (beta) and UreC (alpha) subunits. Three heterotrimers associate to form the active enzyme.

The protein resides in the cytoplasm. The catalysed reaction is urea + 2 H2O + H(+) = hydrogencarbonate + 2 NH4(+). The protein operates within nitrogen metabolism; urea degradation; CO(2) and NH(3) from urea (urease route): step 1/1. Its function is as follows. Ureolysis may allow urea to be employed as a nitrogen source for growth and produces ammonia which may protect from killing at low pH. The polypeptide is Urease subunit beta (Streptococcus salivarius (strain 57.I)).